Reading from the N-terminus, the 118-residue chain is Non-specific lipid-transfer protein (118 aa).

Residues 1 to 27 (MGVSKVAIAVAVMLMVVVINHPAVVEG) form the signal peptide. 4 cysteine pairs are disulfide-bonded: C30/C75, C40/C54, C55/C100, and C77/C114.

The protein belongs to the plant LTP family. Post-translationally, disulfide bonds.

In terms of biological role, plant non-specific lipid-transfer proteins transfer phospholipids as well as galactolipids across membranes. May play a role in wax or cutin deposition in the cell walls of expanding epidermal cells and certain secretory tissues. This Apium graveolens (Celery) protein is Non-specific lipid-transfer protein.